The sequence spans 284 residues: Tegument protein VP22 (284 aa).

Disordered stretches follow at residues 1–126 (MSYY…WSID) and 239–284 (LYAS…SRRR). Residues 74–83 (SRDDDDRRQP) are compositionally biased toward basic and acidic residues. Positions 94 to 108 (ERRKSQTTVTTRRKT) are enriched in basic residues. Polar residues predominate over residues 115–126 (KSSNSNGPWSID).

It belongs to the alphaherpesvirinae VP22 tegument protein family. As to quaternary structure, interacts with gE (via C-terminus); this interaction is necessary for the recruitment of VP22 to the Golgi and its packaging into virions. Interacts with gM (via C-terminus). Interacts with VP16; this interaction allows the formation of a tripartite complex composed of VP16, VP22 and UL41/VHS. Interacts with the capsid-binding protein UL16. Interacts with host CGAS. In terms of processing, highly phosphorylated in the host cell. Packaging is selective for underphosphorylated forms.

The protein resides in the virion tegument. The protein localises to the host cytoplasm. It is found in the host nucleus. It localises to the host Golgi apparatus. Functionally, tegument protein that plays different roles during the time course of infection. Participates in both the accumulation of viral mRNAs and viral protein translation at late time of infection. Modulates the RNase activity of the virion host shutoff protein UL41 probably to ensure necessary levels of key cellular mRNAs and proteins. Plays a role in microtubule reorganization that occurs after viral infection by stabilizing microtubule network. Plays a role in the inhibition of host innate immune system by targeting the CGAS enzymatic activity which is the principal cytosolic DNA sensor that detects invading viral DNA. Acts by mediating disruption of liquid-like droplets in which CGAS is activated, thereby preventing CGAS activity. The sequence is that of Tegument protein VP22 (UL49) from Amazona oratrix (yellow-headed parrot).